The following is a 388-amino-acid chain: tRNA(Ile)-lysidine synthase (388 aa).

Residue 51–56 (SGGRDS) coordinates ATP.

It belongs to the tRNA(Ile)-lysidine synthase family.

It is found in the cytoplasm. It catalyses the reaction cytidine(34) in tRNA(Ile2) + L-lysine + ATP = lysidine(34) in tRNA(Ile2) + AMP + diphosphate + H(+). In terms of biological role, ligates lysine onto the cytidine present at position 34 of the AUA codon-specific tRNA(Ile) that contains the anticodon CAU, in an ATP-dependent manner. Cytidine is converted to lysidine, thus changing the amino acid specificity of the tRNA from methionine to isoleucine. This Bifidobacterium longum subsp. infantis (strain ATCC 15697 / DSM 20088 / JCM 1222 / NCTC 11817 / S12) protein is tRNA(Ile)-lysidine synthase.